A 291-amino-acid polypeptide reads, in one-letter code: tRNA U34 carboxymethyltransferase (291 aa).

Residues Lys-61, Trp-75, Lys-80, Gly-100, 122 to 124 (DPS), Tyr-169, and Arg-284 each bind carboxy-S-adenosyl-L-methionine.

It belongs to the class I-like SAM-binding methyltransferase superfamily. CmoB family. As to quaternary structure, homotetramer.

It catalyses the reaction carboxy-S-adenosyl-L-methionine + 5-hydroxyuridine(34) in tRNA = 5-carboxymethoxyuridine(34) in tRNA + S-adenosyl-L-homocysteine + H(+). Catalyzes carboxymethyl transfer from carboxy-S-adenosyl-L-methionine (Cx-SAM) to 5-hydroxyuridine (ho5U) to form 5-carboxymethoxyuridine (cmo5U) at position 34 in tRNAs. In Campylobacter lari (strain RM2100 / D67 / ATCC BAA-1060), this protein is tRNA U34 carboxymethyltransferase.